Reading from the N-terminus, the 342-residue chain is Anthranilate phosphoribosyltransferase (342 aa).

5-phospho-alpha-D-ribose 1-diphosphate contacts are provided by residues G83, 86-87 (GD), T91, 93-96 (NIST), 111-119 (KHGNRGVSS), and S123. Residue G83 coordinates anthranilate. S95 contacts Mg(2+). Residue N114 coordinates anthranilate. R169 is an anthranilate binding site. 2 residues coordinate Mg(2+): D228 and E229.

Belongs to the anthranilate phosphoribosyltransferase family. Homodimer. Mg(2+) serves as cofactor.

It catalyses the reaction N-(5-phospho-beta-D-ribosyl)anthranilate + diphosphate = 5-phospho-alpha-D-ribose 1-diphosphate + anthranilate. It participates in amino-acid biosynthesis; L-tryptophan biosynthesis; L-tryptophan from chorismate: step 2/5. Catalyzes the transfer of the phosphoribosyl group of 5-phosphorylribose-1-pyrophosphate (PRPP) to anthranilate to yield N-(5'-phosphoribosyl)-anthranilate (PRA). The chain is Anthranilate phosphoribosyltransferase from Paraburkholderia phymatum (strain DSM 17167 / CIP 108236 / LMG 21445 / STM815) (Burkholderia phymatum).